Reading from the N-terminus, the 259-residue chain is Ribosomal RNA small subunit methyltransferase A (259 aa).

S-adenosyl-L-methionine-binding residues include Asn-15, Leu-17, Gly-41, Glu-62, Asp-86, and Asn-105.

It belongs to the class I-like SAM-binding methyltransferase superfamily. rRNA adenine N(6)-methyltransferase family. RsmA subfamily.

The protein resides in the cytoplasm. The catalysed reaction is adenosine(1518)/adenosine(1519) in 16S rRNA + 4 S-adenosyl-L-methionine = N(6)-dimethyladenosine(1518)/N(6)-dimethyladenosine(1519) in 16S rRNA + 4 S-adenosyl-L-homocysteine + 4 H(+). Specifically dimethylates two adjacent adenosines (A1518 and A1519) in the loop of a conserved hairpin near the 3'-end of 16S rRNA in the 30S particle. May play a critical role in biogenesis of 30S subunits. This chain is Ribosomal RNA small subunit methyltransferase A, found in Mycoplasmopsis synoviae (strain 53) (Mycoplasma synoviae).